Consider the following 913-residue polypeptide: Chitin synthase 1 (913 aa).

The interval 1–135 (MAYRGGGPND…QQPGAQTGGL (135 aa)) is disordered. Asparagine 25 carries N-linked (GlcNAc...) asparagine glycosylation. Over residues 41 to 56 (RDPHARGTSPYEHHLG) the composition is skewed to basic and acidic residues. Residue asparagine 539 is glycosylated (N-linked (GlcNAc...) asparagine). 7 consecutive transmembrane segments (helical) span residues 566-586 (FFFHIQLIYNVLNVIFTWFSL), 625-645 (IINSILQYLYLAFLVIQFVLA), 658-678 (IASFIVFGFIQTYILVLSGYL), 712-732 (VILVALVTIYGLNFIASFMYL), 740-760 (SFPYYLVLMSTYINILMVYAF), 840-860 (TGLVVSWLFSNAALIVFITTD), and 881-901 (FLLYSTAVLALVRFTGFLWFL).

This sequence belongs to the chitin synthase family. Class III subfamily.

The protein localises to the cell membrane. The enzyme catalyses [(1-&gt;4)-N-acetyl-beta-D-glucosaminyl](n) + UDP-N-acetyl-alpha-D-glucosamine = [(1-&gt;4)-N-acetyl-beta-D-glucosaminyl](n+1) + UDP + H(+). Polymerizes chitin, a structural polymer of the cell wall and septum, by transferring the sugar moiety of UDP-GlcNAc to the non-reducing end of the growing chitin polymer. Plays a role in cell wall integrity and is involved in tolerance to hyperosmotic conditions. Required to successfully penetrate the host plants and thus plays a key role in pathogenicity. The polypeptide is Chitin synthase 1 (Verticillium dahliae (strain VdLs.17 / ATCC MYA-4575 / FGSC 10137) (Verticillium wilt)).